The primary structure comprises 424 residues: Glutamate-1-semialdehyde 2,1-aminomutase (424 aa).

N6-(pyridoxal phosphate)lysine is present on Lys-266.

It belongs to the class-III pyridoxal-phosphate-dependent aminotransferase family. HemL subfamily. Homodimer. Pyridoxal 5'-phosphate serves as cofactor.

The protein resides in the cytoplasm. The catalysed reaction is (S)-4-amino-5-oxopentanoate = 5-aminolevulinate. Its pathway is porphyrin-containing compound metabolism; protoporphyrin-IX biosynthesis; 5-aminolevulinate from L-glutamyl-tRNA(Glu): step 2/2. This chain is Glutamate-1-semialdehyde 2,1-aminomutase, found in Thermus thermophilus (strain ATCC 27634 / DSM 579 / HB8).